A 999-amino-acid chain; its full sequence is Embryonic polarity protein dorsal (999 aa).

Residues 1–44 (MFPNQNNGAAPGQGPAVDGQQSLNYNGLPAQQQQQLAQSTKNVR) are disordered. The 296-residue stretch at 47–342 (PYVKITEQPA…TFWNLHRHLK (296 aa)) folds into the RHD domain. Phosphoserine; by PKA is present on Ser312. Disordered stretches follow at residues 389-424 (FNHE…EQYT) and 670-851 (QARK…SVSG). Residues 402–424 (EQEQSVQQEQYTQEQSLQQEQYT) show a composition bias toward low complexity. Residues 668–677 (NSQARKPETP) carry the Nuclear export signal motif. Pro residues predominate over residues 677–686 (PMRPVPPVPP). Basic and acidic residues predominate over residues 710 to 719 (KQDSNAENRS). Residues 720–734 (IEANTVQTKPSTGES) show a composition bias toward polar residues. The short motif at 756 to 773 (KKPGFFSKLFSRRKSKPD) is the Nuclear localization signal element. Composition is skewed to low complexity over residues 819–829 (SNPAPAKSSPV) and 836–851 (SKLT…SVSG).

In terms of assembly, interacts with tamo via the nuclear localization signal. Interacts with emb, a component of the nuclear export complex. As to expression, in unchallenged larvae, expression of both isoforms is seen in fat body and gut (isoform A is more abundant). After immune challenge levels of both isoforms are enhanced.

It is found in the cytoplasm. The protein resides in the nucleus. Functionally, embryonic developmental transcription factor. The lateral or ventral identity of a cell depends upon the concentration of this protein in its nucleus during the blastoderm stage. Acts as a morphogenetic transcription factor that specifically binds to the kappa-B-related consensus sequence 5'-GRGAAAANCC-3', located in the enhancer region of zygotic genes such as Zen, Twist, Snail and Decapentaplegic, promoting their expression. Part of a signaling pathway involving NF-kappa-B and Toll-related receptors, that functions in the apoptosis of unfit cells during cell competition. Mediates an immune response in larvae. May be part of a NF-kappa-B and Tollo signaling cascade that regulates development of the peripheral nervous system. The sequence is that of Embryonic polarity protein dorsal (dl) from Drosophila melanogaster (Fruit fly).